The chain runs to 78 residues: Large ribosomal subunit protein bL28 (78 aa).

The segment at 1–25 (MARVCQVTGKRPMSGHHVSHANNKT) is disordered. Basic residues predominate over residues 13 to 25 (MSGHHVSHANNKT).

Belongs to the bacterial ribosomal protein bL28 family.

This is Large ribosomal subunit protein bL28 from Nitrosomonas eutropha (strain DSM 101675 / C91 / Nm57).